Consider the following 374-residue polypeptide: Chaperone protein DnaJ (374 aa).

In terms of domain architecture, J spans Asp-5–Gly-70. The CR-type zinc-finger motif lies at Gly-129–Glu-207. Cys-142, Cys-145, Cys-159, Cys-162, Cys-181, Cys-184, Cys-195, and Cys-198 together coordinate Zn(2+). 4 CXXCXGXG motif repeats span residues Cys-142–Gly-149, Cys-159–Gly-166, Cys-181–Gly-188, and Cys-195–Gly-202. The disordered stretch occupies residues Pro-216–Pro-238.

It belongs to the DnaJ family. Homodimer. Requires Zn(2+) as cofactor.

The protein resides in the cytoplasm. Participates actively in the response to hyperosmotic and heat shock by preventing the aggregation of stress-denatured proteins and by disaggregating proteins, also in an autonomous, DnaK-independent fashion. Unfolded proteins bind initially to DnaJ; upon interaction with the DnaJ-bound protein, DnaK hydrolyzes its bound ATP, resulting in the formation of a stable complex. GrpE releases ADP from DnaK; ATP binding to DnaK triggers the release of the substrate protein, thus completing the reaction cycle. Several rounds of ATP-dependent interactions between DnaJ, DnaK and GrpE are required for fully efficient folding. Also involved, together with DnaK and GrpE, in the DNA replication of plasmids through activation of initiation proteins. This Marinobacter nauticus (strain ATCC 700491 / DSM 11845 / VT8) (Marinobacter aquaeolei) protein is Chaperone protein DnaJ.